Consider the following 1048-residue polypeptide: Probable histidine kinase 2 (1048 aa).

Over 1 to 16 the chain is Cytoplasmic; sequence MREVEEVSKWRRRCCY. The chain crosses the membrane as a helical span at residues 17 to 37; it reads FWILFPLAVIATCMTITVVTF. Over 38–336 the chain is Extracellular; it reads CSSTMYMTEV…AMVGVFRRGG (299 aa). The chain crosses the membrane as a helical span at residues 337 to 357; that stretch reads VTMVAVACAAAAAATVACVLM. Topologically, residues 358-1048 are cytoplasmic; sequence ARALRRAVAR…AVHGVCKGKN (691 aa). One can recognise a Histidine kinase domain in the interval 398–662; that stretch reads SASHDIRSAL…CFGFNVLLKT (265 aa). Position 401 is a phosphohistidine; by autocatalysis (His-401). The 133-residue stretch at 912-1044 folds into the Response regulatory domain; sequence HVLLVEDTLV…RIVEAVHGVC (133 aa). Asp-975 bears the 4-aspartylphosphate mark.

In terms of processing, activation probably requires a transfer of a phosphate group between a His in the transmitter domain and an Asp of the receiver domain.

The protein localises to the cell membrane. It carries out the reaction ATP + protein L-histidine = ADP + protein N-phospho-L-histidine.. Functionally, cytokinin receptor related to bacterial two-component regulators. Functions as a histidine kinase and transmits the stress signal to a downstream MAPK cascade. This Oryza sativa subsp. indica (Rice) protein is Probable histidine kinase 2.